Reading from the N-terminus, the 505-residue chain is Gap junction alpha-10 protein (505 aa).

Residues 1-16 are Cytoplasmic-facing; that stretch reads MGDWNLLGGILEEVHS. Residues 17–37 form a helical membrane-spanning segment; it reads HSTIVGKIWLTILFIFRMLVL. At 38–76 the chain is on the extracellular side; sequence GVAAEDVWDDEQSAFACNTQQPGCNNICYDDAFPISLIR. The helical transmembrane segment at 77–97 threads the bilayer; that stretch reads FWVLQIIFVSSPSLVYMGHAL. Residues 98-165 are Cytoplasmic-facing; sequence YRLRDFEKQR…TYVLHILTRS (68 aa). A helical transmembrane segment spans residues 166–186; sequence VLEVGFMIGQYILYGFQMHPI. The Extracellular segment spans residues 187 to 209; that stretch reads YKCTQAPCPNSVDCFVSRPTEKT. Residues 210-230 traverse the membrane as a helical segment; sequence IFMLFMHSIAAISLLLNILEI. The Cytoplasmic segment spans residues 231–505; that stretch reads FHLGIRKIMR…IIHETYVYVY (275 aa). Positions 371–383 are enriched in polar residues; the sequence is TMTASQHRPSSAL. The tract at residues 371 to 491 is disordered; the sequence is TMTASQHRPS…SKSSHVDSPP (121 aa). Residues 437–446 show a composition bias toward basic and acidic residues; sequence MSEKGQRHSD. Residues 447-460 are compositionally biased toward low complexity; it reads SGSSRSLNSSCLDF.

It belongs to the connexin family. Alpha-type (group II) subfamily. A connexon is composed of a hexamer of connexins. In terms of tissue distribution, low levels were detected in skin, heart, kidney, testis, ovary, intestine. Expression not detected in brain, sciatic nerve or liver. According to PubMed:15147297 expression is detected only in horizontal cells in the inner nuclear layer of the retina and not in other neurons of the central nervous system or tissues. Detected in the outer plexiform layer of the retina (at protein level).

It localises to the cell membrane. The protein resides in the cell junction. Its subcellular location is the gap junction. One gap junction consists of a cluster of closely packed pairs of transmembrane channels, the connexons, through which materials of low MW diffuse from one cell to a neighboring cell. Involved in tracer coupling between horizontal cells of the retina. May play a role in the regulation of horizontal cell patterning. This chain is Gap junction alpha-10 protein (Gja10), found in Mus musculus (Mouse).